We begin with the raw amino-acid sequence, 394 residues long: Ribose-phosphate pyrophosphokinase 5, chloroplastic (394 aa).

The transit peptide at 1–33 directs the protein to the chloroplast; that stretch reads MASIVQPSPTFPALNLRRSSLIRPPSSVRFPLK. Positions 202, 204, 213, and 217 each coordinate Mg(2+). A binding of phosphoribosylpyrophosphate region spans residues 288–303; sequence GKVAIMVDDMIDTAGT.

Belongs to the ribose-phosphate pyrophosphokinase family.

The protein localises to the plastid. Its subcellular location is the chloroplast. The enzyme catalyses D-ribose 5-phosphate + ATP = 5-phospho-alpha-D-ribose 1-diphosphate + AMP + H(+). This is Ribose-phosphate pyrophosphokinase 5, chloroplastic (PRS5) from Arabidopsis thaliana (Mouse-ear cress).